The primary structure comprises 84 residues: ICP35 (84 aa).

The polypeptide is ICP35 (Crustacea (WSSV)).